We begin with the raw amino-acid sequence, 292 residues long: Large ribosomal subunit protein uL18 (292 aa).

This sequence belongs to the universal ribosomal protein uL18 family. Component of the large ribosomal subunit (LSU).

It is found in the cytoplasm. The protein localises to the nucleus. Component of the ribosome, a large ribonucleoprotein complex responsible for the synthesis of proteins in the cell. The small ribosomal subunit (SSU) binds messenger RNAs (mRNAs) and translates the encoded message by selecting cognate aminoacyl-transfer RNA (tRNA) molecules. The large subunit (LSU) contains the ribosomal catalytic site termed the peptidyl transferase center (PTC), which catalyzes the formation of peptide bonds, thereby polymerizing the amino acids delivered by tRNAs into a polypeptide chain. The nascent polypeptides leave the ribosome through a tunnel in the LSU and interact with protein factors that function in enzymatic processing, targeting, and the membrane insertion of nascent chains at the exit of the ribosomal tunnel. In Dictyostelium discoideum (Social amoeba), this protein is Large ribosomal subunit protein uL18 (rpl5).